Consider the following 302-residue polypeptide: DDRGK domain-containing protein 1 (302 aa).

Residues 1–21 (MDPLLLGSVGVLVLAVTLIIW) form a helical membrane-spanning segment. Residues 22 to 302 (RLLKLQWDEK…IRLETPSAAE (281 aa)) are Cytoplasmic-facing. The disordered stretch occupies residues 101–178 (EYDEDGKKIG…EREEKERKEH (78 aa)). Over residues 118 to 178 (QAKEEKRQMR…EREEKERKEH (61 aa)) the composition is skewed to basic and acidic residues.

It belongs to the DDRGK1 family.

Its subcellular location is the endoplasmic reticulum membrane. Its function is as follows. Substrate adapter for ufmylation, the covalent attachment of the ubiquitin-like modifier ufm-1 to substrate proteins. The protein is DDRGK domain-containing protein 1 of Caenorhabditis elegans.